Reading from the N-terminus, the 265-residue chain is uncharacterized protein (265 aa).

Residues alanine 143–alanine 205 are a coiled coil.

This is an uncharacterized protein from Aquifex aeolicus (strain VF5).